We begin with the raw amino-acid sequence, 309 residues long: Heme-dependent oxidative N-demethylase beta subunit (309 aa).

The FAD-binding FR-type domain occupies 2 to 103; the sequence is STLLDVRVAA…SPPANLFPLH (102 aa). In terms of domain architecture, 2Fe-2S ferredoxin-type spans 226–309; the sequence is FRVELARSGQ…GCGSPILLDL (84 aa). [2Fe-2S] cluster-binding residues include cysteine 260, cysteine 265, cysteine 268, and cysteine 296.

Belongs to the PDR/VanB family. In terms of assembly, the heme-dependent oxidative N-demethylase (HODM) is a heterotetramer composed of a catalytic alpha subunit, a FMN/2Fe-2S-dependent oxidoreductase beta subunit, a gamma subunit with putative aminotransferase activity, and a delta subunit of unknown function. [2Fe-2S] cluster serves as cofactor. The cofactor is FMN.

Functionally, component of the heme-dependent oxidative N-demethylase (HODM) enzyme, that catalyzes the NADPH-dependent oxidation of dimethylamine (DMA) to methylamine (MA) and formaldehyde. Functions in bacterial methylated amine catabolism, linking alkylamine oxidation to the tetrahydrofolate C1 pool. The beta subunit of HODM binds FMN and a 2Fe-2S cluster, and likely reduces the ferric heme iron of the alpha subunit to ferrous using NADPH. The sequence is that of Heme-dependent oxidative N-demethylase beta subunit from Ectopseudomonas mendocina (strain ymp) (Pseudomonas mendocina).